Consider the following 334-residue polypeptide: Nucleoid-associated protein SG1574 (334 aa).

It belongs to the YejK family.

It is found in the cytoplasm. It localises to the nucleoid. The sequence is that of Nucleoid-associated protein SG1574 from Sodalis glossinidius (strain morsitans).